The following is a 603-amino-acid chain: Sabinene hydrate synthase, chloroplastic (603 aa).

The N-terminal 47 residues, 1–47, are a transit peptide targeting the chloroplast; the sequence is MSTISINHVGLLRNPLHGKSKRASINKSWSLCLPRSSSASRLVKPCR. 2 residues coordinate Mn(2+): Asp357 and Asp361. Residues 357 to 361 carry the DDXXD motif motif; sequence DDVYD. Homodimerization stretches follow at residues 363-369 and 435-472; these read YGTLDEL and EAEW…VSIP. Mn(2+) contacts are provided by Asp501 and Glu509.

The protein belongs to the terpene synthase family. In terms of assembly, homodimer. Requires Mn(2+) as cofactor. Mg(2+) is required as a cofactor.

The protein localises to the plastid. The protein resides in the chloroplast. The enzyme catalyses (2E)-geranyl diphosphate + H2O = sabinene hydrate + diphosphate. It functions in the pathway secondary metabolite biosynthesis; terpenoid biosynthesis. Involved in the biosynthesis of phenolic monoterpenes natural products. Monoterpene synthase which catalyzes the conversion of geranyl diphosphate (GPP) to sabinene hydrate, mainly (Z)-sabinene hydrate and to a lower extent (E)-sabinene hydrate, and the formation of minor amounts and traces of several other monoterpenes (e.g. mainly alpha-thujene, alpha-pinene and myrcene). This Thymus vulgaris (Thyme) protein is Sabinene hydrate synthase, chloroplastic.